The sequence spans 153 residues: Nucleoside diphosphate kinase (153 aa).

ATP is bound by residues Lys-9, Phe-57, Arg-85, Thr-91, Arg-102, and Asn-112. The Pros-phosphohistidine intermediate role is filled by His-115.

It belongs to the NDK family. In terms of assembly, homotetramer. Requires Mg(2+) as cofactor.

Its subcellular location is the cytoplasm. The catalysed reaction is a 2'-deoxyribonucleoside 5'-diphosphate + ATP = a 2'-deoxyribonucleoside 5'-triphosphate + ADP. It catalyses the reaction a ribonucleoside 5'-diphosphate + ATP = a ribonucleoside 5'-triphosphate + ADP. In terms of biological role, major role in the synthesis of nucleoside triphosphates other than ATP. The ATP gamma phosphate is transferred to the NDP beta phosphate via a ping-pong mechanism, using a phosphorylated active-site intermediate. The polypeptide is Nucleoside diphosphate kinase (Parabacteroides distasonis (strain ATCC 8503 / DSM 20701 / CIP 104284 / JCM 5825 / NCTC 11152)).